Here is a 1273-residue protein sequence, read N- to C-terminus: DNA-directed RNA polymerase subunit beta (1273 aa).

The segment at 1252–1273 is disordered; that stretch reads ADDQDLVVSSNDEEVSENDERS.

It belongs to the RNA polymerase beta chain family. As to quaternary structure, the RNAP catalytic core consists of 2 alpha, 1 beta, 1 beta' and 1 omega subunit. When a sigma factor is associated with the core the holoenzyme is formed, which can initiate transcription.

It carries out the reaction RNA(n) + a ribonucleoside 5'-triphosphate = RNA(n+1) + diphosphate. Its function is as follows. DNA-dependent RNA polymerase catalyzes the transcription of DNA into RNA using the four ribonucleoside triphosphates as substrates. In Dehalococcoides mccartyi (strain ATCC BAA-2100 / JCM 16839 / KCTC 5957 / BAV1), this protein is DNA-directed RNA polymerase subunit beta.